The chain runs to 945 residues: Xylanolytic transcriptional activator xlnR (945 aa).

Disordered stretches follow at residues 1–33 (MSTP…TVGL) and 53–74 (AAGT…MSHA). A compositionally biased stretch (low complexity) spans 14–24 (SPFSSGSQSTG). The segment at residues 125–151 (CDQCNQLRTKCDGQHPCAHCIEFGLTC) is a DNA-binding region (zn(2)-C6 fungal-type). Disordered stretches follow at residues 172-251 (AAAA…PSLG) and 559-601 (PPNV…INVT). Composition is skewed to polar residues over residues 177–188 (HGSNGHSGQANA) and 218–251 (ISSQ…PSLG). The span at 565–581 (ARQDGERDGDGEADRRH) shows a compositional bias: basic and acidic residues.

This sequence belongs to the xlnR/xlr1 family.

Its subcellular location is the nucleus. Its function is as follows. Transcriptional activator of the xylanolytic system. Involved in the regulation of extracellular cellulolytic and xylanolytic genes and in the regulation of the intracellular activities of D-xylose catabolic genes in the pentose catabolic pathway (PCP) in response to the presence of D-xylose. The sequence is that of Xylanolytic transcriptional activator xlnR (xlnR) from Aspergillus kawachii (White koji mold).